The primary structure comprises 56 residues: Sec-independent protein translocase protein TatA (56 aa).

Residues 1 to 21 (MALGPWQIFLILVIILVLFGA) traverse the membrane as a helical segment.

Belongs to the TatA/E family. In terms of assembly, the Tat system comprises two distinct complexes: a TatABC complex, containing multiple copies of TatA, TatB and TatC subunits, and a separate TatA complex, containing only TatA subunits. Substrates initially bind to the TatABC complex, which probably triggers association of the separate TatA complex to form the active translocon.

It localises to the cell inner membrane. Its function is as follows. Part of the twin-arginine translocation (Tat) system that transports large folded proteins containing a characteristic twin-arginine motif in their signal peptide across membranes. TatA could form the protein-conducting channel of the Tat system. This is Sec-independent protein translocase protein TatA from Ehrlichia ruminantium (strain Welgevonden).